A 131-amino-acid polypeptide reads, in one-letter code: Encapsulated ferritin-like protein (131 aa).

Residues Glu30, Glu60, and His63 each contribute to the Fe cation site. A disordered region spans residues 96-131 (EEEDTGSSSSVAASPTSAPSHGSLGIGSLRQEGKED). The interval 98–131 (EDTGSSSSVAASPTSAPSHGSLGIGSLRQEGKED) is targeting peptide. A compositionally biased stretch (low complexity) spans 102–115 (SSSSVAASPTSAPS).

The protein belongs to the ferritin-like superfamily. EncFtn family. Forms dimers at all pH tested; under acidic conditions formes decamers. The N-terminal domain (residues 1-97) crystallizes as a decameric ring. Four decamers are loaded in the encapsulin nanocompartment in a tetrahedral arrangement. A 3 nm gap is consistently seen between the shell and the cargo. The target peptide extends away from the decameric ring, to allow binding to the interior of the encapsulin nanocompartment shell.

The protein resides in the encapsulin nanocompartment. It catalyses the reaction 4 Fe(2+) + O2 + 4 H(+) = 4 Fe(3+) + 2 H2O. Its activity is regulated as follows. The ferroxidase activity is inhibited by zinc. Functionally, cargo protein of a type 1 encapsulin nanocompartment. A ferritin-like ferroxidase that converts Fe(2+) to Fe(3+) iron inside the encapsulin nanocompartment. Mineralized Fe(3+) is released to the exterior of the decameric complex for deposition in the encapsulin nanocompartment. In solution the decamer binds 10-15 iron cations; in the encapsulin nanocompartment the decamer can bind up to 48 ions, perhaps via its internal channel, and on its exterior. The cargo-loaded nanocompartment maximally sequesters up to 4150 Fe ions. This chain is Encapsulated ferritin-like protein, found in Haliangium ochraceum (strain DSM 14365 / JCM 11303 / SMP-2).